A 670-amino-acid polypeptide reads, in one-letter code: Solute carrier organic anion transporter family member 1A3 (670 aa).

The Cytoplasmic portion of the chain corresponds to 1–20; the sequence is MGDLEKGAATHGAGCFAKIK. The chain crosses the membrane as a helical span at residues 21–40; it reads VFLMALTCAYVSKSLSGTFM. Over 41–59 the chain is Extracellular; the sequence is SSMLTQIERQFGIPTAIVG. A helical transmembrane segment spans residues 60-80; it reads FINGSFEIGNLLLIIFVSYFG. Residues 81-86 lie on the Cytoplasmic side of the membrane; it reads MKLHRP. Residues 87-111 form a helical membrane-spanning segment; sequence IVIGVGCAVMGLGCFIISLPHFLMG. Residues 112-155 are Extracellular-facing; it reads RYEYETTILPTSNLSSNSFLCMENQTQTLNPAQDPAECVKEVKS. Asn124 and Asn135 each carry an N-linked (GlcNAc...) asparagine glycan. Residues 156-184 traverse the membrane as a helical segment; that stretch reads LMWIYVLVGNIIRGIGETPIMPLGVSYIE. Residues 185-203 lie on the Cytoplasmic side of the membrane; sequence NFAKSENSPLYIGILETGK. The chain crosses the membrane as a helical span at residues 204–224; sequence MIGPIFGLLLGSFCASIYVDT. Topologically, residues 225–242 are extracellular; that stretch reads GSVNTDDLTITPTDIRWV. A helical transmembrane segment spans residues 243 to 267; the sequence is GAWWIGFLVCAGVNILISIPFFFFP. Residues 268 to 311 are Cytoplasmic-facing; the sequence is KTLPKEGLQENVDGTENAKEESTEKRPRKKNRGITKDFFPFLKS. Residues 277 to 296 form a disordered region; the sequence is ENVDGTENAKEESTEKRPRK. The segment covering 283 to 292 has biased composition (basic and acidic residues); it reads ENAKEESTEK. A helical transmembrane segment spans residues 312 to 333; sequence PVLQPDLHAVHPYKVLQVNAFN. The Extracellular portion of the chain corresponds to 334–353; sequence IYFSFLPKYLENQYGKSTAE. Residues 354–377 form a helical membrane-spanning segment; sequence VIFLMGVYNLPAICIGYLIAGFMM. Residues 378-381 lie on the Cytoplasmic side of the membrane; that stretch reads KKFK. Residues 382–405 form a helical membrane-spanning segment; the sequence is ITVKTAAFLAFCLSLSEYSFGFCN. The Extracellular segment spans residues 406 to 513; the sequence is FLITCDNVPV…PECTNKLQYL (108 aa). The Kazal-like domain occupies 433–488; that stretch reads NNVLADCNTRCSCLTKTWDPVCGDNGLAYMSACLAGCEKSVGTGTNMVFHNCSCIQ. Cystine bridges form between Cys439-Cys469, Cys445-Cys465, and Cys454-Cys486. Asn483 and Asn492 each carry an N-linked (GlcNAc...) asparagine glycan. The chain crosses the membrane as a helical span at residues 514 to 536; that stretch reads LILSGFLSILYSFAAIPGYMVFL. The Cytoplasmic segment spans residues 537-545; that stretch reads RCIKSEEKS. A helical membrane pass occupies residues 546 to 571; that stretch reads LGIGIHAFCIRVFAGIPAPIYFGALI. The Extracellular segment spans residues 572–605; the sequence is DRTCLHWGTQKCGAPGACRMYDINSFRRIYLGMS. The chain crosses the membrane as a helical span at residues 606–623; the sequence is AALRGSSYLPAFVIVILT. Residues 624–670 lie on the Cytoplasmic side of the membrane; the sequence is RKFSLPGKINSSEMEIAEMKLTEKESQCTDVHRNPKFKNDGELKTKL.

Belongs to the organo anion transporter (TC 2.A.60) family. As to expression, all isoforms are detected in kidney, and many are kidney specific. Isoforms 2 and 13 are also detected in liver. Isoforms 4 and 9/K4 are ubiquitous, but isoform 9/K13 is kidney specific. Isoforms 5 and 14 are detected in all tissues tested, with the exception of pancreas and spleen. Isoforms 11 and 15 are detected in kidney, pancreas and testis. Isoform 7 is detected in kidney, liver, testis and spleen.

The protein resides in the cell membrane. Its function is as follows. Mediates the Na(+)-independent transport of organic anions such as methotrexate, taurocholate, folate and prostaglandin E2. May contribute to renal secretion and/or reabsorption of hydrophobic anionic compounds. Mediates renal clearance of methotrexate from the blood. In Rattus norvegicus (Rat), this protein is Solute carrier organic anion transporter family member 1A3 (Slco1a3).